We begin with the raw amino-acid sequence, 202 residues long: dTTP/UTP pyrophosphatase (202 aa).

Catalysis depends on D80, which acts as the Proton acceptor.

The protein belongs to the Maf family. YhdE subfamily. Requires a divalent metal cation as cofactor.

The protein resides in the cytoplasm. It catalyses the reaction dTTP + H2O = dTMP + diphosphate + H(+). It carries out the reaction UTP + H2O = UMP + diphosphate + H(+). Its function is as follows. Nucleoside triphosphate pyrophosphatase that hydrolyzes dTTP and UTP. May have a dual role in cell division arrest and in preventing the incorporation of modified nucleotides into cellular nucleic acids. This is dTTP/UTP pyrophosphatase from Alkalilimnicola ehrlichii (strain ATCC BAA-1101 / DSM 17681 / MLHE-1).